The following is a 156-amino-acid chain: Ribosomal RNA large subunit methyltransferase H (156 aa).

Residues Leu-73, Gly-104, and 123–128 (ISSMTL) each bind S-adenosyl-L-methionine.

The protein belongs to the RNA methyltransferase RlmH family. As to quaternary structure, homodimer.

It localises to the cytoplasm. The catalysed reaction is pseudouridine(1915) in 23S rRNA + S-adenosyl-L-methionine = N(3)-methylpseudouridine(1915) in 23S rRNA + S-adenosyl-L-homocysteine + H(+). Specifically methylates the pseudouridine at position 1915 (m3Psi1915) in 23S rRNA. The protein is Ribosomal RNA large subunit methyltransferase H of Burkholderia ambifaria (strain MC40-6).